The sequence spans 312 residues: ADP-L-glycero-D-manno-heptose-6-epimerase (312 aa).

NADP(+) contacts are provided by residues 10-11, 31-32, K38, K53, 75-79, and N92; these read FI, DN, and EGACS. Residue Y140 is the Proton acceptor of the active site. K144 contributes to the NADP(+) binding site. A substrate-binding site is contributed by N169. V170 and K178 together coordinate NADP(+). The active-site Proton acceptor is the K178. Substrate is bound by residues S180, H187, 201 to 204, R209, and Y274; that span reads FAGS.

The protein belongs to the NAD(P)-dependent epimerase/dehydratase family. HldD subfamily. In terms of assembly, homopentamer. Requires NADP(+) as cofactor.

It carries out the reaction ADP-D-glycero-beta-D-manno-heptose = ADP-L-glycero-beta-D-manno-heptose. The protein operates within nucleotide-sugar biosynthesis; ADP-L-glycero-beta-D-manno-heptose biosynthesis; ADP-L-glycero-beta-D-manno-heptose from D-glycero-beta-D-manno-heptose 7-phosphate: step 4/4. Its pathway is bacterial outer membrane biogenesis; LPS core biosynthesis. Its function is as follows. Catalyzes the interconversion between ADP-D-glycero-beta-D-manno-heptose and ADP-L-glycero-beta-D-manno-heptose via an epimerization at carbon 6 of the heptose. The chain is ADP-L-glycero-D-manno-heptose-6-epimerase from Photorhabdus laumondii subsp. laumondii (strain DSM 15139 / CIP 105565 / TT01) (Photorhabdus luminescens subsp. laumondii).